Consider the following 156-residue polypeptide: Peptide methionine sulfoxide reductase MsrA (156 aa).

The active site involves Cys-10.

The protein belongs to the MsrA Met sulfoxide reductase family.

The enzyme catalyses L-methionyl-[protein] + [thioredoxin]-disulfide + H2O = L-methionyl-(S)-S-oxide-[protein] + [thioredoxin]-dithiol. The catalysed reaction is [thioredoxin]-disulfide + L-methionine + H2O = L-methionine (S)-S-oxide + [thioredoxin]-dithiol. Has an important function as a repair enzyme for proteins that have been inactivated by oxidation. Catalyzes the reversible oxidation-reduction of methionine sulfoxide in proteins to methionine. The polypeptide is Peptide methionine sulfoxide reductase MsrA (Metamycoplasma arthritidis (strain 158L3-1) (Mycoplasma arthritidis)).